The chain runs to 384 residues: WD repeat-containing protein 74 (384 aa).

WD repeat units follow at residues 40 to 80, 83 to 122, 128 to 168, 179 to 220, 224 to 266, and 267 to 306; these read RREE…FLSQ, CPGG…ASSD, KVGP…EPVF, DLRV…RRPV, TYGE…GCLK, and GLAG…GLEH. S214 bears the Phosphoserine mark. K311 is subject to N6-methyllysine. A required for nucleolar and nuclear location region spans residues 320–384; sequence SGRDNWEDEP…KKKRPGSTSP (65 aa). The interval 323-384 is disordered; the sequence is DNWEDEPQEP…KKKRPGSTSP (62 aa). Residues 371–384 show a composition bias toward basic residues; it reads QRRKKKKRPGSTSP.

In terms of assembly, isoform 1 interacts (through WDR repeats) with NVL; the interaction is independent of RNA or pre-60S ribosome particles. Isoform 2 does not interact with NVL. Interacts with MTREX; the interaction dissociation in a late stage of rRNA synthesis is required for appropriate maturation of pre-60S particles and depends on the ATPase activity of NVL.

It is found in the nucleus. It localises to the nucleolus. Its function is as follows. Regulatory protein of the MTREX-exosome complex involved in the synthesis of the 60S ribosomal subunit. Participates in an early cleavage of the pre-rRNA processing pathway in cooperation with NVL. Required for blastocyst formation, is necessary for RNA transcription, processing and/or stability during preimplantation development. This chain is WD repeat-containing protein 74 (Wdr74), found in Mus musculus (Mouse).